The primary structure comprises 427 residues: Histidine--tRNA ligase (427 aa).

This sequence belongs to the class-II aminoacyl-tRNA synthetase family. As to quaternary structure, homodimer.

It localises to the cytoplasm. The catalysed reaction is tRNA(His) + L-histidine + ATP = L-histidyl-tRNA(His) + AMP + diphosphate + H(+). The polypeptide is Histidine--tRNA ligase (Corynebacterium urealyticum (strain ATCC 43042 / DSM 7109)).